The chain runs to 455 residues: tRNA modification GTPase MnmE (455 aa).

Positions 26, 86, and 125 each coordinate (6S)-5-formyl-5,6,7,8-tetrahydrofolate. Residues glycine 222–phenylalanine 376 enclose the TrmE-type G domain. A K(+)-binding site is contributed by asparagine 232. Residues asparagine 232–serine 237, threonine 251–threonine 257, and aspartate 276–glycine 279 each bind GTP. Serine 236 contributes to the Mg(2+) binding site. Positions 251, 253, and 256 each coordinate K(+). A Mg(2+)-binding site is contributed by threonine 257. A (6S)-5-formyl-5,6,7,8-tetrahydrofolate-binding site is contributed by lysine 455.

This sequence belongs to the TRAFAC class TrmE-Era-EngA-EngB-Septin-like GTPase superfamily. TrmE GTPase family. As to quaternary structure, homodimer. Heterotetramer of two MnmE and two MnmG subunits. K(+) serves as cofactor.

It localises to the cytoplasm. In terms of biological role, exhibits a very high intrinsic GTPase hydrolysis rate. Involved in the addition of a carboxymethylaminomethyl (cmnm) group at the wobble position (U34) of certain tRNAs, forming tRNA-cmnm(5)s(2)U34. This chain is tRNA modification GTPase MnmE, found in Lactococcus lactis subsp. cremoris (strain MG1363).